Consider the following 829-residue polypeptide: FAST kinase domain-containing protein 1, mitochondrial (829 aa).

Lys346 carries the post-translational modification N6-acetyllysine. Residues 761-821 (IAIELLDVRA…KDARMDYLRE (61 aa)) enclose the RAP domain.

It belongs to the FAST kinase family. Expression detected in spleen, testis, colon, heart, smooth muscle, kidney, brain, lung, liver, brown and white adipose tissue with highest expression in heart and brown adipose tissue.

It localises to the mitochondrion. Functionally, involved in the down-regulation of mitochondrial MT-ND3 mRNA levels which leads to decreased respiratory complex I abundance and activity. This chain is FAST kinase domain-containing protein 1, mitochondrial (Fastkd1), found in Mus musculus (Mouse).